Consider the following 241-residue polypeptide: MDIQLIIESFPKLLAAVPTTLTLAFISLLIGFVVSVPVALMRLSKNRIVSSLAYGYVYIIRSTPLLVQMFLIYYGSAQFRGVLSEVGLWSSFREPWFCAILALALNTAAYTSEIIRGGIQSVSLGQIEAARAVGMSTFLQFRRIVFPIAIRQALPAYGNEVMLIIKSTSLASTITIVEVTGLAKQIISATYSPVEVFIVAGAIYLFITFVVSRLVMLAEWWLNPHMRARVGGTAPKAAETH.

The 199-residue stretch at 17–215 folds into the ABC transmembrane type-1 domain; sequence VPTTLTLAFI…FITFVVSRLV (199 aa). The next 5 helical transmembrane spans lie at 21-41, 52-72, 95-115, 161-181, and 191-211; these read LTLA…VALM, LAYG…MFLI, PWFC…SEII, VMLI…EVTG, and YSPV…TFVV.

Belongs to the binding-protein-dependent transport system permease family. HisMQ subfamily.

It localises to the cell inner membrane. Functionally, component of the nopaline active transport system probably consisting of four subunits: Q, M, P and T. This system is also capable of transporting octopine provided that catabolic functions are induced with nopaline. In Agrobacterium fabrum (strain C58 / ATCC 33970) (Agrobacterium tumefaciens (strain C58)), this protein is Nopaline transport system permease protein NocM (nocM).